Reading from the N-terminus, the 456-residue chain is Gustatory receptor for sugar taste 64a (456 aa).

The tract at residues 1 to 30 (MKGPNLNFRKTPSKDNGVKQVESLARPETP) is disordered. The Cytoplasmic portion of the chain corresponds to 1–91 (MKGPNLNFRK…RESNPRRVRF (91 aa)). A helical transmembrane segment spans residues 92 to 114 (AYKSIPMFVTLIFMIATSILFLS). Over 115–128 (MFTHLLKIGITAKN) the chain is Extracellular. Residues 129 to 150 (FVGLVFFGCVLSAYVVFIRLAK) traverse the membrane as a helical segment. G131 lines the sucrose pocket. Residues 151–182 (KWPAVVRIWTRTEIPFTKPPYEIPKRNLSRRV) are Cytoplasmic-facing. Residues 183–205 (QLAALAIIGLSLGEHALYQVSAI) form a helical membrane-spanning segment. Sucrose is bound by residues E196, H197, and Y234. D-maltose is bound by residues E196, H197, Y234, N253, and T257. The Extracellular segment spans residues 206–245 (LSYTRRIQMCANITTVPSFNNYMQTNYDYVFQLLPYSPII). Residues 246-271 (AVLILLINGACTFVWNYMDLFIMMIS) traverse the membrane as a helical segment. A sucrose-binding site is contributed by T257. The Cytoplasmic portion of the chain corresponds to 272 to 318 (KGLSYRFEQITTRIRKLEHEEVCESVFIQIREHYVKMCELLEFVDSA). A helical membrane pass occupies residues 319–342 (MSSLILLSCVNNLYFVCYQLLNVF). At 343-350 (NKLRWPIN) the chain is on the extracellular side. A helical transmembrane segment spans residues 351 to 373 (YIYFWYSLLYLIGRTAFVFLTAA). Y353 lines the sucrose pocket. A D-maltose-binding site is contributed by Y353. Over 374–421 (DINEESKRGLGVLRRVSSRSWCVEVERLIFQMTTQTVALSGKKFYFLT) the chain is Cytoplasmic. A helical transmembrane segment spans residues 422-441 (RRLLFGMAGTIVTYELVLLQ). Residues 442 to 456 (FDEPNRRKGLQPLCA) are Extracellular-facing.

It belongs to the insect chemoreceptor superfamily. Gustatory receptor (GR) family. Gr5a subfamily. In terms of assembly, homotetramer. Expressed in Gr5a-expressing sugar-sensing cells.

It is found in the cell membrane. In terms of biological role, one of the few identified sugar gustatory receptors identified so far and which promotes the starvation-induced increase of feeding motivation. Required in combination with Gr64f to detect sucrose, maltose, and glucose. In Drosophila melanogaster (Fruit fly), this protein is Gustatory receptor for sugar taste 64a (Gr64a).